Reading from the N-terminus, the 333-residue chain is Fructose-1,6-bisphosphatase class 1 (333 aa).

Residues Glu-92, Asp-113, Leu-115, and Asp-116 each contribute to the Mg(2+) site. Residues 116–119 (DGSS), Asn-209, Tyr-242, and Lys-272 each bind substrate. Residue Glu-278 coordinates Mg(2+).

This sequence belongs to the FBPase class 1 family. Homotetramer. It depends on Mg(2+) as a cofactor.

Its subcellular location is the cytoplasm. It carries out the reaction beta-D-fructose 1,6-bisphosphate + H2O = beta-D-fructose 6-phosphate + phosphate. It participates in carbohydrate biosynthesis; Calvin cycle. This chain is Fructose-1,6-bisphosphatase class 1, found in Chlorobium luteolum (strain DSM 273 / BCRC 81028 / 2530) (Pelodictyon luteolum).